Consider the following 212-residue polypeptide: Leucine efflux protein (212 aa).

Helical transmembrane passes span 12–32 (TYLV…LFVL), 49–69 (GVFI…ATLI), 71–91 (TTPI…LYLG), 122–142 (ILSL…VQFI), 153–173 (FFIL…FLII), and 188–208 (LAKV…ARLA).

Belongs to the Rht family.

The protein resides in the cell inner membrane. The catalysed reaction is L-leucine(in) + H(+)(out) = L-leucine(out) + H(+)(in). Its function is as follows. Exporter of leucine. The chain is Leucine efflux protein (leuE) from Shigella sonnei (strain Ss046).